We begin with the raw amino-acid sequence, 3130 residues long: MFSVRIVTADYYMASPLQGLDTCQSPLTQAPVKKVPVVRVFGATPAGQKTCLHLHGIFPYLYVPYDGYGQQPESYLSQMAFSIDRALNVALGNPSSTAQHVFKVSLVSGMPFYGYHEKERHFMKIYLYNPTMVKRICELLQSGAIMNKFYQPHEAHIPYLLQLFIDYNLYGMNLINLAAVKFRKARRKSNTLHATGSCKNHLSGNSLADTLFRWEQDEIPSSLILEGVEPQSTCELEVDAVAADILNRLDIEAQIGGNPGLQAIWEDEKQRRRNRNETSQMSQPESQDHRFVPATESEKKFQKRLQEILKQNDFSVTLSGSVDYSDGSQEFSAELTLHSEVLSPEMLQCTPANMVEVHKDKESSKGHTRHKVEEALINEEAILNLMENSQTFQPLTQRLSESPVFMDSSPDEALVHLLAGLESDGYRGERNRMPSPCRSFGNNKYPQNSDDEENEPQIEKEEMELSLVMSQRWDSNIEEHCAKKRSLCRNTHRSSTEDDDSSSGEEMEWSDNSLLLASLSIPQLDGTADENSDNPLNNENSRTHSSVIATSKLSVKPSIFHKDAATLEPSSSAKITFQCKHTSALSSHVLNKEDLIEDLSQTNKNTEKGLDNSVTSFTNESTYSMKYPGSLSSTVHSENSHKENSKKEILPVSSCESSIFDYEEDIPSVTRQVPSRKYTNIRKIEKDSPFIHMHRHPNENTLGKNSFNFSDLNHSKNKVSSEGNEKGNSTALSSLFPSSFTENCELLSCSGENRTMVHSLNSTADESGLNKLKIRYEEFQEHKTEKPSLSQQAAHYMFFPSVVLSNCLTRPQKLSPVTYKLQPGNKPSRLKLNKRKLAGHQETSTKSSETGSTKDNFIQNNPCNSNPEKDNALASDLTKTTRGAFENKTPTDGFIDCHFGDGTLETEQSFGLYGNKYTLRAKRKVNYETEDSESSFVTHNSKISLPHPMEIGESLDGTLKSRKRRKMSKKLPPVIIKYIIINRFRGRKNMLVKLGKIDSKEKQVILTEEKMELYKKLAPLKDFWPKVPDSPATKYPIYPLTPKKSHRRKSKHKSAKKKTGKQQRTNNENIKRTLSFRKKRSHAILSPPSPSYNAETEDCDLNYSDVMSKLGFLSERSTSPINSSPPRCWSPTDPRAEEIMAAAEKEAMLFKGPNVYKKTVNSRIGKTSRARAQIKKSKAKLANPSIVTKKRNKRNQTNKLVDDGKKKPRAKQKTNEKGTSRKHTTLKDEKIKSQSGAEVKFVLKHQNVSEFASSSGGSQLLFKQKDMPLMGSAVDHPLSASLPTGINAQQKLSGCFSSFLESKKSVDLQTFPSSRDDLHPSVVCNSIGPGVSKINVQRPHNQSAMFTLKESTLIQKNIFDLSNHLSQVAQNTQISSGMSSKIEDNANNIQRNYLSSIGKLSEYRNSLESKLDQAYTPNFLHCKDSQQQIVCIAEQSKHSETCSPGNTASEESQMPNNCFVTSLRSPIKQIAWEQKQRGFILDMSNFKPERVKPRSLSEAISQTKALSQCKNRNVSTPSAFGEGQSGLAVLKELLQKRQQKAQNANTTQDPLSNKHQPNKNISGSLEHNKANKRTRSVTSPRKPRTPRSTKQKEKIPKLLKVDSLNLQNSSQLDNSVSDDSPIFFSDPGFESCYSLEDSLSPEHNYNFDINTIGQTGFCSFYSGSQFVPADQNLPQKFLSDAVQDLFPGQAIEKNEFLSHDNQKCDEDKHHTTDSASWIRSGTLSPEIFEKSTIDSNENRRHNQWKNSFHPLTTRSNSIMDSFCVQQAEDCLSEKSRLNRSSVSKEVFLSLPQPNNSDWIQGHTRKEMGQSLDSANTSFTAILSSPDGELVDVACEDLELYVSRNNDMLTPTPDSSPRSTSSPSQSKNGSFTPRTANILKPLMSPPSREEIMATLLDHDLSETIYQEPFCSNPSDVPEKPREIGGRLLMVETRLANDLAEFEGDFSLEGLRLWKTAFSAMTQNPRPGSPLRSGQGVVNKGSSNSPKMVEDKKIVIMPCKCAPSRQLVQVWLQAKEEYERSKKLPKTKPTGVVKSAENFSSSVNPDDKPVVPPKMDVSPCILPTTAHTKEDVDNSQIALQAPTTGCSQTASESQMLPPVASASDPEKDEDDDDNYYISYSSPDSPVIPPWQQPISPDSKALNGDDRPSSPVEELPSLAFENFLKPIKDGIQKSPCSEPQEPLVISPINTRARTGKCESLCFHSTPIIQRKLLERLPEAPGLSPLSTEPKTQKLSNKKGSNTDTLRRVLLTQAKNQFAAVNTPQKETSQIDGPSLNNTYGFKVSIQNLQEAKALHEIQNLTLISVELHARTRRDLEPDPEFDPICALFYCISSDTPLPDTEKTELTGVIVIDKDKTVFSQDIRYQTPLLIRSGITGLEVTYAADEKALFHEIANIIKRYDPDILLGYEIQMHSWGYLLQRAAALSIDLCRMISRVPDDKIENRFAAERDEYGSYTMSEINIVGRITLNLWRIMRNEVALTNYTFENVSFHVLHQRFPLFTFRVLSDWFDNKTDLYRWKMVDHYVSRVRGNLQMLEQLDLIGKTSEMARLFGIQFLHVLTRGSQYRVESMMLRIAKPMNYIPVTPSVQQRSQMRAPQCVPLIMEPESRFYSNSVLVLDFQSLYPSIVIAYNYCFSTCLGHVENLGKYDEFKFGCTSLRVPPDLLYQVRHDITVSPNGVAFVKPSVRKGVLPRMLEEILKTRFMVKQSMKAYKQDRALSRMLDARQLGLKLIANVTFGYTSANFSGRMPCIEVGDSIVHKARETLERAIKLVNDTKKWGARVVYGDTDSMFVLLKGATKEQSFKIGQEIAEAVTATNPKPVKLKFEKVYLPCVLQTKKRYVGYMYETLDQKDPVFDAKGIETVRRDSCPAVSKILERSLKLLFETRDISLIKQYVQRQCMKLLEGKASIQDFIFAKEYRGSFSYKPGACVPALELTRKMLTYDRRSEPQVGERVPYVIIYGTPGVPLIQLVRRPVEVLQDPTLRLNATYYITKQILPPLARIFSLIGIDVFSWYHELPRIHKATSSSRSEPEGRKGTISQYFTTLHCPVCDDLTQHGICSKCRSQPQHVAVILNQEIRELERQQEQLVKICKNCTGCFDRHIPCVSLNCPVLFKLSRVNRELSKAPYLRQLLDQF.

6 disordered regions span residues 263-295 (AIWEDEKQRRRNRNETSQMSQPESQDHRFVPAT), 425-457 (GYRGERNRMPSPCRSFGNNKYPQNSDDEENEPQ), 487-510 (LCRNTHRSSTEDDDSSSGEEMEWS), 524-548 (LDGTADENSDNPLNNENSRTHSSVI), 697-728 (PNENTLGKNSFNFSDLNHSKNKVSSEGNEKGN), and 817-871 (VTYK…EKDN). Residues 286-295 (SQDHRFVPAT) show a composition bias toward basic and acidic residues. Positions 497 to 509 (EDDDSSSGEEMEW) are enriched in acidic residues. Polar residues-rich tracts occupy residues 533–548 (DNPLNNENSRTHSSVI) and 699–728 (ENTLGKNSFNFSDLNHSKNKVSSEGNEKGN). The span at 828–838 (SRLKLNKRKLA) shows a compositional bias: basic residues. Residues 842 to 854 (ETSTKSSETGSTK) show a composition bias toward low complexity. Over residues 855 to 866 (DNFIQNNPCNSN) the composition is skewed to polar residues. A Phosphoserine modification is found at serine 1030. Disordered stretches follow at residues 1035–1095 (YPIY…YNAE), 1162–1231 (SRIG…DEKI), and 1537–1600 (RQQK…KLLK). At threonine 1041 the chain carries Phosphothreonine. 2 stretches are compositionally biased toward basic residues: residues 1043–1061 (KKSHRRKSKHKSAKKKTGK) and 1166–1179 (KTSRARAQIKKSKA). The segment covering 1213–1231 (KTNEKGTSRKHTTLKDEKI) has biased composition (basic and acidic residues). Positions 1540 to 1565 (KAQNANTTQDPLSNKHQPNKNISGSL) are enriched in polar residues. Positions 1570–1589 (ANKRTRSVTSPRKPRTPRST) are enriched in basic residues. The segment covering 1590–1600 (KQKEKIPKLLK) has biased composition (basic and acidic residues). At serine 1724 the chain carries Phosphoserine. Disordered regions lie at residues 1845–1882 (NDMLTPTPDSSPRSTSSPSQSKNGSFTPRTANILKPLM), 1962–1984 (NPRPGSPLRSGQGVVNKGSSNSP), 2017–2050 (ERSKKLPKTKPTGVVKSAENFSSSVNPDDKPVVP), 2080–2150 (PTTG…SPVE), and 2216–2236 (APGLSPLSTEPKTQKLSNKKG). Residues 1847-1898 (MLTPTPDSSPRSTSSPSQSKNGSFTPRTANILKPLMSPPSREEIMATLLDHD) form a mediates interaction with MAD2L2 region. Low complexity predominate over residues 1849–1865 (TPTPDSSPRSTSSPSQS). Position 1967 is a phosphoserine (serine 1967). Residues 2080–2092 (PTTGCSQTASESQ) show a composition bias toward polar residues. Residues 2113–2122 (YYISYSSPDS) show a composition bias toward low complexity. Polar residues predominate over residues 2221 to 2236 (PLSTEPKTQKLSNKKG). Cysteine 3042, cysteine 3045, cysteine 3054, and cysteine 3057 together coordinate Zn(2+). The CysA-type zinc finger occupies 3042–3057 (CPVCDDLTQHGICSKC). Residues cysteine 3086, cysteine 3089, cysteine 3099, and cysteine 3104 each coordinate [4Fe-4S] cluster. Residues 3086–3104 (CKNCTGCFDRHIPCVSLNC) carry the CysB motif motif.

This sequence belongs to the DNA polymerase type-B family. Heterodimer with MAD2L2. This dimer forms the minimal DNA polymerase zeta complex (Pol-zeta2), with REV3L bearing DNA polymerase catalytic activity, although its activity is very low in this context. Component of the tetrameric Pol-zeta complex (Pol-zeta4), which consists of REV3L, MAD2L2, POLD2 and POLD3; Pol-zeta4 is the fully active form of DNA polymerase zeta. It depends on [4Fe-4S] cluster as a cofactor. In terms of tissue distribution, ubiquitously expressed.

The protein localises to the nucleus. The catalysed reaction is DNA(n) + a 2'-deoxyribonucleoside 5'-triphosphate = DNA(n+1) + diphosphate. In terms of biological role, catalytic subunit of the DNA polymerase zeta complex, an error-prone polymerase specialized in translesion DNA synthesis (TLS). Lacks an intrinsic 3'-5' exonuclease activity and thus has no proofreading function. The protein is DNA polymerase zeta catalytic subunit (REV3L) of Homo sapiens (Human).